Reading from the N-terminus, the 218-residue chain is Octanoyltransferase (218 aa).

Positions T27–A210 constitute a BPL/LPL catalytic domain. Substrate contacts are provided by residues R72 to H79, S139 to G141, and G152 to A154. C170 (acyl-thioester intermediate) is an active-site residue.

Belongs to the LipB family.

It is found in the cytoplasm. It carries out the reaction octanoyl-[ACP] + L-lysyl-[protein] = N(6)-octanoyl-L-lysyl-[protein] + holo-[ACP] + H(+). Its pathway is protein modification; protein lipoylation via endogenous pathway; protein N(6)-(lipoyl)lysine from octanoyl-[acyl-carrier-protein]: step 1/2. Its function is as follows. Catalyzes the transfer of endogenously produced octanoic acid from octanoyl-acyl-carrier-protein onto the lipoyl domains of lipoate-dependent enzymes. Lipoyl-ACP can also act as a substrate although octanoyl-ACP is likely to be the physiological substrate. The chain is Octanoyltransferase from Nitratidesulfovibrio vulgaris (strain ATCC 29579 / DSM 644 / CCUG 34227 / NCIMB 8303 / VKM B-1760 / Hildenborough) (Desulfovibrio vulgaris).